A 76-amino-acid chain; its full sequence is RNA-binding protein KhpA (76 aa).

The KH domain occupies 29–76 (QNIIELRVSPKDVGKVIGKNGRIAKSLRAILTAASVKAGKNFSLEIID).

Belongs to the KhpA RNA-binding protein family. Forms a complex with KhpB.

It is found in the cytoplasm. A probable RNA chaperone. Forms a complex with KhpB which binds to cellular RNA and controls its expression. Plays a role in peptidoglycan (PG) homeostasis and cell length regulation. The protein is RNA-binding protein KhpA of Leptospira interrogans serogroup Icterohaemorrhagiae serovar copenhageni (strain Fiocruz L1-130).